Here is a 453-residue protein sequence, read N- to C-terminus: Nuclear distribution protein PAC1 (453 aa).

Residues 19-51 enclose the LisH domain; the sequence is QKDELHKSILDYFKTNNLHESFATLMREANQEG. The stretch at 69–96 forms a coiled coil; sequence TSVIRLQKKIMEMESRISQLQEELSAAP. WD repeat units follow at residues 120 to 161, 162 to 201, 205 to 244, 247 to 286, 314 to 355, 356 to 395, and 413 to 452; these read GHRL…RTLK, GHTK…KNIK, GHDH…CTKT, GHAE…TKVE, LDPN…KTLT, GHDN…CTRT, and IEAP…KIWT.

It belongs to the WD repeat LIS1/nudF family. In terms of assembly, self-associates. Interacts with NDL1 and dynein.

It localises to the cytoplasm. It is found in the cytoskeleton. Its subcellular location is the spindle pole. In terms of biological role, positively regulates the activity of the minus-end directed microtubule motor protein dynein. May enhance dynein-mediated microtubule sliding by targeting dynein to the microtubule plus end. Required for nuclear migration during vegetative growth as well as development. Required for localization of dynein to the mitotic spindle poles. Recruits additional proteins to the dynein complex at SPBs. Required for retrograde early endosome (EE) transport from the hyphal tip. In Mycosarcoma maydis (Corn smut fungus), this protein is Nuclear distribution protein PAC1.